A 232-amino-acid polypeptide reads, in one-letter code: 2,3,4,5-tetrahydropyridine-2,6-dicarboxylate N-acetyltransferase (232 aa).

This sequence belongs to the transferase hexapeptide repeat family. DapH subfamily.

It carries out the reaction (S)-2,3,4,5-tetrahydrodipicolinate + acetyl-CoA + H2O = L-2-acetamido-6-oxoheptanedioate + CoA. Its pathway is amino-acid biosynthesis; L-lysine biosynthesis via DAP pathway; LL-2,6-diaminopimelate from (S)-tetrahydrodipicolinate (acetylase route): step 1/3. Catalyzes the transfer of an acetyl group from acetyl-CoA to tetrahydrodipicolinate. In Streptococcus gordonii (strain Challis / ATCC 35105 / BCRC 15272 / CH1 / DL1 / V288), this protein is 2,3,4,5-tetrahydropyridine-2,6-dicarboxylate N-acetyltransferase.